A 614-amino-acid chain; its full sequence is Maltose permease MAL61 (614 aa).

Residues 1–48 are disordered; that stretch reads MKGLSSLINRKKDRNDSHLDEIENGVNATEFNSIEMEEQGKKSDFDLS. The Cytoplasmic segment spans residues 1 to 108; the sequence is MKGLSSLINR…AAAWSLLVST (108 aa). Positions 38–48 are enriched in basic and acidic residues; it reads EQGKKSDFDLS. A helical membrane pass occupies residues 109 to 129; that stretch reads TLIQEGYDTAILGAFYALPVF. Residues 130–144 are Extracellular-facing; the sequence is QKKYGSLNSNTGDYE. The helical transmembrane segment at 145–165 threads the bilayer; sequence ISVSWQIGLCLCYMAGEIVGL. Topologically, residues 166–180 are cytoplasmic; the sequence is QVTGPSVDYMGNRYT. The helical transmembrane segment at 181-201 threads the bilayer; that stretch reads LIMALFFLAAFIFILYFCKSL. Position 202 (Gly202) is a topological domain, extracellular. Residues 203–223 form a helical membrane-spanning segment; that stretch reads MIAVGQALCGMPWGCFQCLTV. Over 224–236 the chain is Cytoplasmic; it reads SYASEICPLALRY. Residues 237–257 form a helical membrane-spanning segment; that stretch reads YLTTYSNLCWTFGQLFAAGIM. Residues 258–272 are Extracellular-facing; it reads KNSQNKYANSELGYK. The helical transmembrane segment at 273-293 threads the bilayer; sequence LPFALQWIWPLPLAVGIFLAP. Residues 294–364 are Cytoplasmic-facing; it reads ESPWWLVKKG…KDGINRRRTR (71 aa). A helical membrane pass occupies residues 365–385; it reads IACLCWIGQCSCGASLIGYST. At 386 to 398 the chain is on the extracellular side; sequence YFYEKAGVSTDTA. The helical transmembrane segment at 399 to 419 threads the bilayer; the sequence is FTFSIIQYCLGIAATFVSWWA. Over 420 to 427 the chain is Cytoplasmic; it reads SKYCGRFD. A helical membrane pass occupies residues 428–448; sequence LYAFGLAFQAIMFFIIGGLGC. Over 449–460 the chain is Extracellular; the sequence is SDTHGAKMGSGA. The helical transmembrane segment at 461 to 481 threads the bilayer; sequence LLMVVAFFYNLGIAPVVFCLV. Residues 482-493 lie on the Cytoplasmic side of the membrane; the sequence is SEMPSSRLRTKT. A helical transmembrane segment spans residues 494–514; that stretch reads IILARNAYNVIQVVVTVLIMY. Residues 515–526 are Extracellular-facing; sequence QLNSEKWNWGAK. A helical transmembrane segment spans residues 527 to 547; that stretch reads SGFFWGGFCLATLAWAVVDLP. Topologically, residues 548-614 are cytoplasmic; that stretch reads ETAGRTFIEI…GRSTPSVVNK (67 aa). The tract at residues 594–614 is disordered; it reads KEDLETSVVDEGRSTPSVVNK.

It belongs to the major facilitator superfamily. Sugar transporter (TC 2.A.1.1) family.

The protein resides in the membrane. Transporter for maltose. The polypeptide is Maltose permease MAL61 (MAL61) (Saccharomyces cerevisiae (Baker's yeast)).